Consider the following 353-residue polypeptide: Probable butyrate kinase (353 aa).

Belongs to the acetokinase family.

It is found in the cytoplasm. The enzyme catalyses butanoate + ATP = butanoyl phosphate + ADP. This Bacteroides thetaiotaomicron (strain ATCC 29148 / DSM 2079 / JCM 5827 / CCUG 10774 / NCTC 10582 / VPI-5482 / E50) protein is Probable butyrate kinase.